We begin with the raw amino-acid sequence, 297 residues long: MNDLIEDFLHFLIVERGLSANTIKAYERDLHYFVSYMDVTKELTDPNTLERSDIVGFMAFARQEGKSPRSVARYIASLRSFFHYLMHDGKMSHDPMIQIETPKQAQGLPKVLNLDDVEKLLSSSDTSTPLGLRDQAMMEILYATGLRVTELVSLKMDDLHLHMGFIQTIGKGDKERIIPLGKTATTVLEKYLEEARPKLRRPKYRNDFVFLNHHGQGLTRQGFWKILKGIAKESGIEKPITPHTLRHSFATHLLENGADLRSVQELLGHADISTTQIYTHVTKLRLKDVYKQFHPRA.

The 86-residue stretch at 1 to 86 (MNDLIEDFLH…SLRSFFHYLM (86 aa)) folds into the Core-binding (CB) domain. Residues 107-291 (GLPKVLNLDD…TKLRLKDVYK (185 aa)) enclose the Tyr recombinase domain. Residues Arg-147, Lys-171, His-243, Arg-246, and His-269 contribute to the active site. The active-site O-(3'-phospho-DNA)-tyrosine intermediate is Tyr-278.

It belongs to the 'phage' integrase family. XerD subfamily. Forms a cyclic heterotetrameric complex composed of two molecules of XerC and two molecules of XerD.

The protein localises to the cytoplasm. Its function is as follows. Site-specific tyrosine recombinase, which acts by catalyzing the cutting and rejoining of the recombining DNA molecules. The XerC-XerD complex is essential to convert dimers of the bacterial chromosome into monomers to permit their segregation at cell division. It also contributes to the segregational stability of plasmids. In Listeria monocytogenes serovar 1/2a (strain ATCC BAA-679 / EGD-e), this protein is Tyrosine recombinase XerD.